We begin with the raw amino-acid sequence, 264 residues long: Rano class II histocompatibility antigen, D-1 beta chain (264 aa).

The first 26 residues, 1–26 (MVWLARDSCVAAVILLLTVLSPPVAL), serve as a signal peptide directing secretion. The interval 27-120 (VRDPTPRFLE…EISESFLVPR (94 aa)) is beta-1. Topologically, residues 27 to 226 (VRDPTPRFLE…AQSTSAQNKK (200 aa)) are extracellular. 2 disulfides stabilise this stretch: cysteine 42/cysteine 106 and cysteine 144/cysteine 200. The N-linked (GlcNAc...) asparagine glycan is linked to asparagine 46. A beta-2 region spans residues 121-215 (TVEPKVTVYP…SLPSPVRVEW (95 aa)). Residues 124 to 228 (PKVTVYPSKT…STSAQNKKMS (105 aa)) form the Ig-like C1-type domain. Residues 216–226 (KAQSTSAQNKK) form a connecting peptide region. The helical transmembrane segment at 227 to 248 (MSGVGGIVLGLLFLGAGLFVYF) threads the bilayer. The Cytoplasmic portion of the chain corresponds to 249–264 (RNQKGQSGLQPTGLLN).

The protein belongs to the MHC class II family.

The protein localises to the membrane. In terms of biological role, involved in the presentation of foreign antigens to the immune system. This Rattus norvegicus (Rat) protein is Rano class II histocompatibility antigen, D-1 beta chain (RT1-Db1).